The following is a 63-amino-acid chain: Large ribosomal subunit protein uL29 (63 aa).

It belongs to the universal ribosomal protein uL29 family.

This Bdellovibrio bacteriovorus (strain ATCC 15356 / DSM 50701 / NCIMB 9529 / HD100) protein is Large ribosomal subunit protein uL29.